We begin with the raw amino-acid sequence, 157 residues long: Transcriptional repressor NrdR (157 aa).

A zinc finger spans residues 3 to 34; sequence CPFCNTVDTKVIDSRLVSEGSQIKRRRQCAIC. In terms of domain architecture, ATP-cone spans 49-139; the sequence is PRVIKNDDLL…VYRSFEDVRE (91 aa).

Belongs to the NrdR family. It depends on Zn(2+) as a cofactor.

Its function is as follows. Negatively regulates transcription of bacterial ribonucleotide reductase nrd genes and operons by binding to NrdR-boxes. This chain is Transcriptional repressor NrdR, found in Hamiltonella defensa subsp. Acyrthosiphon pisum (strain 5AT).